Reading from the N-terminus, the 176-residue chain is Adenine phosphoribosyltransferase (176 aa).

This sequence belongs to the purine/pyrimidine phosphoribosyltransferase family. Homodimer.

Its subcellular location is the cytoplasm. It catalyses the reaction AMP + diphosphate = 5-phospho-alpha-D-ribose 1-diphosphate + adenine. It participates in purine metabolism; AMP biosynthesis via salvage pathway; AMP from adenine: step 1/1. Catalyzes a salvage reaction resulting in the formation of AMP, that is energically less costly than de novo synthesis. This chain is Adenine phosphoribosyltransferase, found in Gluconacetobacter diazotrophicus (strain ATCC 49037 / DSM 5601 / CCUG 37298 / CIP 103539 / LMG 7603 / PAl5).